The chain runs to 745 residues: Centromere protein I (745 aa).

The span at 1–27 (MATPRLTRNSQQQNRISQGSNSRQTTL) shows a compositional bias: polar residues. The disordered stretch occupies residues 1-58 (MATPRLTRNSQQQNRISQGSNSRQTTLLDWKVKDKAGNSKSVLEESSSLEDSNHADDQ). Residues 39-50 (SKSVLEESSSLE) are compositionally biased toward low complexity.

Belongs to the CENP-I/CTF3 family. As to quaternary structure, component of the CENPA-CAD complex, composed of CENPI, CENPK, CENPL, CENPO, CENPP, CENPQ, CENPR and CENPS. The CENPA-CAD complex interacts with the CENPA-NAC complex, at least composed of CENPA, CENPC, CENPH, CENPM, CENPN, CENPT and CENPU. Interacts with SENP6. Sumoylated. Sumoylated form can be polyubiquitinated by RNF4, leading to its degradation. Desumoylation by SENP6 prevents its degradation. Highly expressed in testis, ovary and spleen. A much lower mRNA level is found in brain and lung, and no expression is detected in liver, kidney, heart, muscle, pituitary gland, prostate, epididymis and seminal vesicle.

It is found in the nucleus. The protein resides in the chromosome. It localises to the centromere. Its function is as follows. Component of the CENPA-CAD (nucleosome distal) complex, a complex recruited to centromeres which is involved in assembly of kinetochore proteins, mitotic progression and chromosome segregation. May be involved in incorporation of newly synthesized CENPA into centromeres via its interaction with the CENPA-NAC complex. Required for the localization of CENPF, MAD1L1 and MAD2 (MAD2L1 or MAD2L2) to kinetochores. Involved in the response of gonadal tissues to follicle-stimulating hormone. The sequence is that of Centromere protein I (Cenpi) from Rattus norvegicus (Rat).